Here is a 587-residue protein sequence, read N- to C-terminus: Protein FRIGIDA-ESSENTIAL 1 (587 aa).

The C3H1-type zinc finger occupies 96 to 123 (KRAALPCKFFAKGWCFNGVSCKFLHVKE). Disordered stretches follow at residues 264–346 (DMGS…SFTI), 368–421 (GDRP…HQET), and 467–492 (IKPA…SDEI). Low complexity predominate over residues 294-304 (NGNSLSGSGSL). Residues 470–479 (AGHDSWHRSD) are compositionally biased toward basic and acidic residues.

Component of the transcription activator complex FRI-C composed of FRI, FRL1, SUF4, FLX and FES1. Interacts with FLX, (via C-terminus) with FRI (via C-terminus), and with RIN1, a component of the SWR1 chromatin-remodeling complex. As to expression, expressed in root and shoot apices and vasculature.

The protein localises to the nucleus. Transcriptional activator involved in the FRIGIDA-mediated vernalization pathway, but not in the autonomous flowering pathway. Acts cooperatively with FRI (FRIGIDA) or FRL1 (FRIGIDA-LIKE 1) to promote FLC (FLOWERING LOCUS C) expression. Required for the stabilization of the FRI-C complex. The sequence is that of Protein FRIGIDA-ESSENTIAL 1 (FES1) from Arabidopsis thaliana (Mouse-ear cress).